Reading from the N-terminus, the 339-residue chain is Uroporphyrinogen decarboxylase (339 aa).

Residues 21–25 (RQAGR), Asp-71, Tyr-147, Ser-202, and His-315 each bind substrate.

It belongs to the uroporphyrinogen decarboxylase family. As to quaternary structure, homodimer.

It is found in the cytoplasm. It carries out the reaction uroporphyrinogen III + 4 H(+) = coproporphyrinogen III + 4 CO2. The protein operates within porphyrin-containing compound metabolism; protoporphyrin-IX biosynthesis; coproporphyrinogen-III from 5-aminolevulinate: step 4/4. Catalyzes the decarboxylation of four acetate groups of uroporphyrinogen-III to yield coproporphyrinogen-III. In Helicobacter acinonychis (strain Sheeba), this protein is Uroporphyrinogen decarboxylase.